Reading from the N-terminus, the 366-residue chain is MLEKRYLVLEDGSYYEGYRLGSDDLSIGEIVFNTAMTGYQETISDPSYTGQIITFTYPLIGNYGINRDDFESLTPKLNGVVVKEASTHPSNFRHQKTLHETLAQYHIPGISGVDTRSITRKIRNYGVLRAGFTDNKDNIQELVEQLKTAELPRDEVQTVSTKTPYVSTGSDLSVVLLDFGKKQNIVRELNLRGCNVTVVPYDTSAEEILGMSPDGVMLSNGPGDPDEVDVALDMIRGILGKIPFFGICLGHQLFALSQGATSFKMKFGHRGANHPVKDLRTGKIDITSQNHGYSIDCDSLKNTDLEVTHIALNDGTVEGLRHKELPAFSVQYHPEARPGPSDSNYLFDEFIAMMKDFKEKERQINA.

Positions 1 to 171 are CPSase; the sequence is MLEKRYLVLE…KTPYVSTGSD (171 aa). The L-glutamine site is built by Ser47, Gly221, and Gly223. In terms of domain architecture, Glutamine amidotransferase type-1 spans 173–360; that stretch reads SVVLLDFGKK…IAMMKDFKEK (188 aa). The active-site Nucleophile is the Cys248. L-glutamine-binding residues include Leu249, Gln252, Asn290, Gly292, and Tyr293. Catalysis depends on residues His333 and Glu335.

Belongs to the CarA family. Composed of two chains; the small (or glutamine) chain promotes the hydrolysis of glutamine to ammonia, which is used by the large (or ammonia) chain to synthesize carbamoyl phosphate. Tetramer of heterodimers (alpha,beta)4.

It carries out the reaction hydrogencarbonate + L-glutamine + 2 ATP + H2O = carbamoyl phosphate + L-glutamate + 2 ADP + phosphate + 2 H(+). The enzyme catalyses L-glutamine + H2O = L-glutamate + NH4(+). Its pathway is amino-acid biosynthesis; L-arginine biosynthesis; carbamoyl phosphate from bicarbonate: step 1/1. It participates in pyrimidine metabolism; UMP biosynthesis via de novo pathway; (S)-dihydroorotate from bicarbonate: step 1/3. Functionally, small subunit of the glutamine-dependent carbamoyl phosphate synthetase (CPSase). CPSase catalyzes the formation of carbamoyl phosphate from the ammonia moiety of glutamine, carbonate, and phosphate donated by ATP, constituting the first step of 2 biosynthetic pathways, one leading to arginine and/or urea and the other to pyrimidine nucleotides. The small subunit (glutamine amidotransferase) binds and cleaves glutamine to supply the large subunit with the substrate ammonia. In Staphylococcus epidermidis (strain ATCC 12228 / FDA PCI 1200), this protein is Carbamoyl phosphate synthase small chain.